Here is a 247-residue protein sequence, read N- to C-terminus: tRNA (guanine-N(1)-)-methyltransferase (247 aa).

S-adenosyl-L-methionine-binding positions include Gly-115 and 135–140 (IGDYVL).

The protein belongs to the RNA methyltransferase TrmD family. As to quaternary structure, homodimer.

The protein resides in the cytoplasm. The enzyme catalyses guanosine(37) in tRNA + S-adenosyl-L-methionine = N(1)-methylguanosine(37) in tRNA + S-adenosyl-L-homocysteine + H(+). In terms of biological role, specifically methylates guanosine-37 in various tRNAs. The chain is tRNA (guanine-N(1)-)-methyltransferase from Alkaliphilus metalliredigens (strain QYMF).